Reading from the N-terminus, the 285-residue chain is 3-methyl-2-oxobutanoate hydroxymethyltransferase 1 (285 aa).

The Mg(2+) site is built by Asp-49 and Asp-88. 3-methyl-2-oxobutanoate-binding positions include 49 to 50 (DS), Asp-88, and Lys-118. Glu-120 serves as a coordination point for Mg(2+). Glu-187 (proton acceptor) is an active-site residue.

It belongs to the PanB family. In terms of assembly, homodecamer; pentamer of dimers. It depends on Mg(2+) as a cofactor.

It is found in the cytoplasm. It catalyses the reaction 3-methyl-2-oxobutanoate + (6R)-5,10-methylene-5,6,7,8-tetrahydrofolate + H2O = 2-dehydropantoate + (6S)-5,6,7,8-tetrahydrofolate. The protein operates within cofactor biosynthesis; (R)-pantothenate biosynthesis; (R)-pantoate from 3-methyl-2-oxobutanoate: step 1/2. Its function is as follows. Catalyzes the reversible reaction in which hydroxymethyl group from 5,10-methylenetetrahydrofolate is transferred onto alpha-ketoisovalerate to form ketopantoate. The sequence is that of 3-methyl-2-oxobutanoate hydroxymethyltransferase 1 from Burkholderia lata (strain ATCC 17760 / DSM 23089 / LMG 22485 / NCIMB 9086 / R18194 / 383).